A 361-amino-acid polypeptide reads, in one-letter code: Dynein axonemal assembly factor 8 (361 aa).

Disordered regions lie at residues 65 to 191 (DPAG…ERRK) and 309 to 334 (AQPG…RRPL). The segment covering 136–157 (TLNTSASQSPRQGPQGEATRSP) has biased composition (polar residues). 2 positions are modified to phosphoserine: serine 142 and serine 144. Residues 321–334 (GSSSSSGHLGRRPL) show a composition bias toward low complexity.

The protein resides in the dynein axonemal particle. The protein localises to the cytoplasm. Its function is as follows. In cyliated cells, dynein axonemal particle-specific protein required for deployment of ODA to the axoneme. Interacts with outer dynein arm (ODA) subunits. In Bos taurus (Bovine), this protein is Dynein axonemal assembly factor 8 (DNAAF8).